We begin with the raw amino-acid sequence, 429 residues long: Glucose-6-phosphate isomerase (429 aa).

Glu282 functions as the Proton donor in the catalytic mechanism. Residues His303 and Lys418 contribute to the active site.

Belongs to the GPI family.

Its subcellular location is the cytoplasm. It catalyses the reaction alpha-D-glucose 6-phosphate = beta-D-fructose 6-phosphate. It participates in carbohydrate biosynthesis; gluconeogenesis. The protein operates within carbohydrate degradation; glycolysis; D-glyceraldehyde 3-phosphate and glycerone phosphate from D-glucose: step 2/4. Its function is as follows. Catalyzes the reversible isomerization of glucose-6-phosphate to fructose-6-phosphate. The protein is Glucose-6-phosphate isomerase of Mesomycoplasma hyopneumoniae (strain 7448) (Mycoplasma hyopneumoniae).